The sequence spans 244 residues: Protein crossbronx (244 aa).

One can recognise a UBC core domain in the interval 20–176; sequence QQEYKILAEY…VLENIKESKE (157 aa).

The protein belongs to the ubiquitin-conjugating enzyme family. FTS subfamily.

This is Protein crossbronx (cbx) from Drosophila persimilis (Fruit fly).